Here is a 361-residue protein sequence, read N- to C-terminus: DNA replication and repair protein RecF (361 aa).

ATP is bound at residue 30–37; it reads GQNAQGKT.

The protein belongs to the RecF family.

Its subcellular location is the cytoplasm. Its function is as follows. The RecF protein is involved in DNA metabolism; it is required for DNA replication and normal SOS inducibility. RecF binds preferentially to single-stranded, linear DNA. It also seems to bind ATP. This Streptococcus gordonii (strain Challis / ATCC 35105 / BCRC 15272 / CH1 / DL1 / V288) protein is DNA replication and repair protein RecF.